We begin with the raw amino-acid sequence, 406 residues long: Phosphopentomutase (406 aa).

Residues Asp10, Asp305, His310, Asp346, His347, and His358 each contribute to the Mn(2+) site.

The protein belongs to the phosphopentomutase family. Mn(2+) is required as a cofactor.

Its subcellular location is the cytoplasm. It carries out the reaction 2-deoxy-alpha-D-ribose 1-phosphate = 2-deoxy-D-ribose 5-phosphate. It catalyses the reaction alpha-D-ribose 1-phosphate = D-ribose 5-phosphate. It functions in the pathway carbohydrate degradation; 2-deoxy-D-ribose 1-phosphate degradation; D-glyceraldehyde 3-phosphate and acetaldehyde from 2-deoxy-alpha-D-ribose 1-phosphate: step 1/2. In terms of biological role, isomerase that catalyzes the conversion of deoxy-ribose 1-phosphate (dRib-1-P) and ribose 1-phosphate (Rib-1-P) to deoxy-ribose 5-phosphate (dRib-5-P) and ribose 5-phosphate (Rib-5-P), respectively. This chain is Phosphopentomutase, found in Methylorubrum extorquens (strain PA1) (Methylobacterium extorquens).